The sequence spans 646 residues: Peptidylprolyl isomerase domain and WD repeat-containing protein 1 (646 aa).

The segment at 1-50 is disordered; sequence MATESGSDSQLRRRRRRDPEGSEKTELSEREPALAVAGSEENDDENEERW. Alanine 2 carries the post-translational modification N-acetylalanine. Basic and acidic residues predominate over residues 17–32; the sequence is RDPEGSEKTELSEREP. WD repeat units follow at residues 88 to 126, 131 to 170, 221 to 260, and 278 to 319; these read MHRD…IEFV, SHLG…MINM, LHVS…YKFP, and KCKA…RVFD. Residues 490–645 form the PPIase cyclophilin-type domain; the sequence is VSDSAIVHTS…EDVSIINITV (156 aa).

Belongs to the cyclophilin-type PPIase family. PPIL1 subfamily. In terms of assembly, identified in the spliceosome C complex.

It is found in the nucleus. The enzyme catalyses [protein]-peptidylproline (omega=180) = [protein]-peptidylproline (omega=0). With respect to regulation, inhibited by cyclosporin A (CsA). PPIase that catalyzes the cis-trans isomerization of proline imidic peptide bonds in oligopeptides and may therefore assist protein folding. May be involved in pre-mRNA splicing. The chain is Peptidylprolyl isomerase domain and WD repeat-containing protein 1 from Mus musculus (Mouse).